We begin with the raw amino-acid sequence, 272 residues long: Ribosomal RNA small subunit methyltransferase J (272 aa).

S-adenosyl-L-methionine-binding positions include 120 to 121 (RD), 136 to 137 (ER), 171 to 172 (SS), and aspartate 188.

The protein belongs to the methyltransferase superfamily. RsmJ family.

It is found in the cytoplasm. The enzyme catalyses guanosine(1516) in 16S rRNA + S-adenosyl-L-methionine = N(2)-methylguanosine(1516) in 16S rRNA + S-adenosyl-L-homocysteine + H(+). Specifically methylates the guanosine in position 1516 of 16S rRNA. The protein is Ribosomal RNA small subunit methyltransferase J of Colwellia psychrerythraea (strain 34H / ATCC BAA-681) (Vibrio psychroerythus).